Reading from the N-terminus, the 456-residue chain is Putative F-box/LRR-repeat protein At3g18150 (456 aa).

The region spanning valine 30 to tyrosine 78 is the F-box domain. 6 LRR repeats span residues threonine 177–histidine 202, cysteine 203–lysine 213, valine 228–cysteine 253, lysine 278–glycine 303, isoleucine 333–threonine 358, and cysteine 396–valine 422.

The protein is Putative F-box/LRR-repeat protein At3g18150 of Arabidopsis thaliana (Mouse-ear cress).